The primary structure comprises 131 residues: Global transcriptional regulator Spx (131 aa).

C10 and C13 are joined by a disulfide.

The protein belongs to the ArsC family. Spx subfamily. In terms of assembly, interacts with the C-terminal domain of the alpha subunit of the RNAP.

It localises to the cytoplasm. Global transcriptional regulator that plays a key role in stress response and exerts either positive or negative regulation of genes. Acts by interacting with the C-terminal domain of the alpha subunit of the RNA polymerase (RNAP). This interaction can enhance binding of RNAP to the promoter region of target genes and stimulate their transcription, or block interaction of RNAP with activator. In Shouchella clausii (strain KSM-K16) (Alkalihalobacillus clausii), this protein is Global transcriptional regulator Spx.